The chain runs to 492 residues: GDP-Man:Man(3)GlcNAc(2)-PP-Dol alpha-1,2-mannosyltransferase (492 aa).

At 1-19 (MAAGERSWCLCKLLRFFYS) the chain is on the lumenal side. The chain crosses the membrane as a helical span at residues 20-40 (LFFPGLIVCGTLCVCLVIVLW). At 41 to 233 (GIRLLLQRKK…TRNPFLSKVK (193 aa)) the chain is on the cytoplasmic side. The helical intramembrane region spans 234–254 (LIYYYLFAFIYGLVGSCSDVV). The Cytoplasmic portion of the chain corresponds to 255–399 (MVNSSWTLNH…IGLHTMWNEH (145 aa)). The helical intramembrane region spans 400–420 (FGIGVVECMAAGTIILAHNSG). Over 421-492 (GPKLDIVVPH…FLSSVEKLFK (72 aa)) the chain is Cytoplasmic.

It belongs to the glycosyltransferase group 1 family. Glycosyltransferase 4 subfamily.

Its subcellular location is the endoplasmic reticulum membrane. The catalysed reaction is an alpha-D-Man-(1-&gt;3)-[alpha-D-Man-(1-&gt;6)]-beta-D-Man-(1-&gt;4)-beta-D-GlcNAc-(1-&gt;4)-alpha-D-GlcNAc-diphospho-di-trans,poly-cis-dolichol + 2 GDP-alpha-D-mannose = an alpha-D-Man-(1-&gt;2)-alpha-D-Man-(1-&gt;2)-alpha-D-Man-(1-&gt;3)-[alpha-D-Man-(1-&gt;6)]-beta-D-Man-(1-&gt;4)-beta-D-GlcNAc-(1-&gt;4)-alpha-D-GlcNAc-diphospho-di-trans,poly-cis-dolichol + 2 GDP + 2 H(+). It functions in the pathway protein modification; protein glycosylation. Its function is as follows. GDP-Man:Man(3)GlcNAc(2)-PP-Dol alpha-1,2-mannosyltransferase that operates in the biosynthetic pathway of dolichol-linked oligosaccharides, the glycan precursors employed in protein asparagine (N)-glycosylation. The assembly of dolichol-linked oligosaccharides begins on the cytosolic side of the endoplasmic reticulum membrane and finishes in its lumen. The sequential addition of sugars to dolichol pyrophosphate produces dolichol-linked oligosaccharides containing fourteen sugars, including two GlcNAcs, nine mannoses and three glucoses. Once assembled, the oligosaccharide is transferred from the lipid to nascent proteins by oligosaccharyltransferases. Catalyzes, on the cytoplasmic face of the endoplasmic reticulum, the addition of the fourth and fifth mannose residues to the dolichol-linked oligosaccharide chain, to produce Man(5)GlcNAc(2)-PP-dolichol core oligosaccharide. Man(5)GlcNAc(2)-PP-dolichol is a substrate for ALG3, the following enzyme in the biosynthetic pathway. This Homo sapiens (Human) protein is GDP-Man:Man(3)GlcNAc(2)-PP-Dol alpha-1,2-mannosyltransferase.